The following is a 185-amino-acid chain: Pyruvate/ketoisovalerate oxidoreductases common subunit gamma (185 aa).

In terms of assembly, heterotetramer of one alpha, one beta, one delta and one gamma chain.

The enzyme catalyses 2 oxidized [2Fe-2S]-[ferredoxin] + pyruvate + CoA = 2 reduced [2Fe-2S]-[ferredoxin] + acetyl-CoA + CO2 + H(+). It catalyses the reaction 3-methyl-2-oxobutanoate + 2 oxidized [2Fe-2S]-[ferredoxin] + CoA = 2-methylpropanoyl-CoA + 2 reduced [2Fe-2S]-[ferredoxin] + CO2 + H(+). This chain is Pyruvate/ketoisovalerate oxidoreductases common subunit gamma (porG), found in Pyrococcus abyssi (strain GE5 / Orsay).